Consider the following 240-residue polypeptide: Putative protein FAM10A4 (240 aa).

Positions 38–94 (MGGTATQKAKSEENTKEEKPDSKVEEDLKADEPSSEESDLEIDKEGVIEPDTDAPQE) are disordered. The span at 46 to 69 (AKSEENTKEEKPDSKVEEDLKADE) shows a compositional bias: basic and acidic residues. The span at 85–94 (IEPDTDAPQE) shows a compositional bias: acidic residues. TPR repeat units follow at residues 110–143 (ANDK…NPRL), 145–177 (ILYA…NPDS), and 179–211 (QPYK…DYDE). The segment at 220–240 (VQPRAQKIAEHQRKYERKREE) is disordered. Positions 226–240 (KIAEHQRKYERKREE) are enriched in basic and acidic residues.

It belongs to the FAM10 family. Highly expressed in bone marrow and weakly in placenta, pancreas, heart and HeLa cell line.

It is found in the cytoplasm. This chain is Putative protein FAM10A4 (ST13P4), found in Homo sapiens (Human).